The chain runs to 306 residues: 4-diphosphocytidyl-2-C-methyl-D-erythritol kinase (306 aa).

Lysine 11 is an active-site residue. 113–123 serves as a coordination point for ATP; that stretch reads PPEGGIGGGSS. Residue aspartate 153 is part of the active site.

This sequence belongs to the GHMP kinase family. IspE subfamily.

It carries out the reaction 4-CDP-2-C-methyl-D-erythritol + ATP = 4-CDP-2-C-methyl-D-erythritol 2-phosphate + ADP + H(+). It participates in isoprenoid biosynthesis; isopentenyl diphosphate biosynthesis via DXP pathway; isopentenyl diphosphate from 1-deoxy-D-xylulose 5-phosphate: step 3/6. Its function is as follows. Catalyzes the phosphorylation of the position 2 hydroxy group of 4-diphosphocytidyl-2C-methyl-D-erythritol. This Leptospira biflexa serovar Patoc (strain Patoc 1 / ATCC 23582 / Paris) protein is 4-diphosphocytidyl-2-C-methyl-D-erythritol kinase.